A 447-amino-acid chain; its full sequence is MNHSLYLVAGLGKTGLSIARYLKRNNKSFVVFDTRKEAPGLAEFQNEFPDVPIYLQQTPDEVISQVTDVITSPGLALDTPVLERARQAGASIYGDIECLAREISAPVIAITGTNGKSTVTTLVGEMAKAAGFRVAVAGNIGTPVLDMLDDEHHYDLWVLELSSFQLDLTYSLSPVVATILNVTPDHLDRHHTMEAYTQAKQRIYRGAKAVLFNREDVYTVPHQSCQTDIKCISFGKDAPSMGNWGLIEQENTTYLAKGMERLLPVESILIKGVHNWMNALAACALAEAAGISMQHILNVLKTFPGLPHRCQWVREVDGVGWINDSKGTNIGATISAINGIGGSMQGKIVLIAGGQGKGADFQELAQPVSEFVRSIVLIGEDADKIESALAKVVPVVRASSLEGAVTIAKTCAKPGDVVLLSPACASLDMFRDFNHRGDVFTSSVRGL.

Position 112–118 (112–118) interacts with ATP; sequence GTNGKST.

It belongs to the MurCDEF family.

It is found in the cytoplasm. It carries out the reaction UDP-N-acetyl-alpha-D-muramoyl-L-alanine + D-glutamate + ATP = UDP-N-acetyl-alpha-D-muramoyl-L-alanyl-D-glutamate + ADP + phosphate + H(+). It participates in cell wall biogenesis; peptidoglycan biosynthesis. Functionally, cell wall formation. Catalyzes the addition of glutamate to the nucleotide precursor UDP-N-acetylmuramoyl-L-alanine (UMA). The protein is UDP-N-acetylmuramoylalanine--D-glutamate ligase of Legionella pneumophila (strain Paris).